The sequence spans 108 residues: Large ribosomal subunit protein eL30 (108 aa).

Belongs to the eukaryotic ribosomal protein eL30 family.

The sequence is that of Large ribosomal subunit protein eL30 (rpl30e) from Saccharolobus solfataricus (strain ATCC 35092 / DSM 1617 / JCM 11322 / P2) (Sulfolobus solfataricus).